The primary structure comprises 200 residues: Large ribosomal subunit protein uL4 (200 aa).

The segment at 42-65 is disordered; that stretch reads TRAQKTRSEVSGGGAKPWRQKGTG.

This sequence belongs to the universal ribosomal protein uL4 family. As to quaternary structure, part of the 50S ribosomal subunit.

In terms of biological role, one of the primary rRNA binding proteins, this protein initially binds near the 5'-end of the 23S rRNA. It is important during the early stages of 50S assembly. It makes multiple contacts with different domains of the 23S rRNA in the assembled 50S subunit and ribosome. Its function is as follows. Forms part of the polypeptide exit tunnel. The polypeptide is Large ribosomal subunit protein uL4 (Vibrio vulnificus (strain CMCP6)).